We begin with the raw amino-acid sequence, 76 residues long: Large ribosomal subunit protein uL29 (76 aa).

The protein belongs to the universal ribosomal protein uL29 family.

In Gloeothece citriformis (strain PCC 7424) (Cyanothece sp. (strain PCC 7424)), this protein is Large ribosomal subunit protein uL29.